The chain runs to 340 residues: Uroporphyrinogen decarboxylase (340 aa).

Residues 23 to 27, D72, Y147, T202, and H316 each bind substrate; that span reads RQAGR.

Belongs to the uroporphyrinogen decarboxylase family. In terms of assembly, homodimer.

It localises to the cytoplasm. The enzyme catalyses uroporphyrinogen III + 4 H(+) = coproporphyrinogen III + 4 CO2. It functions in the pathway porphyrin-containing compound metabolism; protoporphyrin-IX biosynthesis; coproporphyrinogen-III from 5-aminolevulinate: step 4/4. Functionally, catalyzes the decarboxylation of four acetate groups of uroporphyrinogen-III to yield coproporphyrinogen-III. The chain is Uroporphyrinogen decarboxylase from Pelobacter propionicus (strain DSM 2379 / NBRC 103807 / OttBd1).